We begin with the raw amino-acid sequence, 502 residues long: UPF0371 protein CLK_3516 (502 aa).

This sequence belongs to the UPF0371 family.

This is UPF0371 protein CLK_3516 from Clostridium botulinum (strain Loch Maree / Type A3).